The following is a 144-amino-acid chain: MYSEIQRGRADIGGLMARPEYREWNPELIKPKKLLNPVKASRSHQELHRELLMNHRRGLGVDSKPELQRVLEHRRRNQLIKKKKEELEAKRLQCPFEQELLRRQQRLNQLEKPPEKEEDHAPEFIKVRENLRRIATLTSEEREL.

Positions 67–94 form a coiled coil; that stretch reads LQRVLEHRRRNQLIKKKKEELEAKRLQC. The Nuclear localization signal signature appears at 74-84; that stretch reads RRRNQLIKKKK. The interval 105–124 is disordered; it reads QRLNQLEKPPEKEEDHAPEF. Basic and acidic residues predominate over residues 112–124; it reads KPPEKEEDHAPEF.

Belongs to the FAM107 family. In terms of assembly, interacts with ACTB. Interacts with COMMD1; this interaction stabilizes COMMD1 in the nucleus. Interacts with MAP1A. Interacts with PRDX1. Interacts with F-actin.

The protein localises to the nucleus. It is found in the cytoplasm. The protein resides in the cytoskeleton. It localises to the stress fiber. Its subcellular location is the cell junction. The protein localises to the focal adhesion. It is found in the cell projection. The protein resides in the ruffle membrane. It localises to the synapse. Stress-inducible actin-binding protein that plays a role in synaptic and cognitive functions by modulating actin filamentous (F-actin) dynamics. Mediates polymerization of globular actin to F-actin. Also binds to, stabilizes and bundles F-actin. Involved in synaptic function by regulating neurite outgrowth in an actin-dependent manner and for the acquisition of hippocampus-dependent cognitive function, such as learning and long-term memory. Plays a role in the actin and microtubule cytoskeleton organization; negatively regulates focal adhesion (FA) assembly promoting malignant glial cell migration in an actin-, microtubule- and MAP1A-dependent manner. Also involved in neuroblastoma G1/S phase cell cycle progression and cell proliferation inhibition by stimulating ubiquitination of NF-kappa-B subunit RELA and NF-kappa-B degradation in a COMMD1- and actin-dependent manner. May play a role in tumor development. The chain is Actin-associated protein FAM107A (FAM107A) from Pan troglodytes (Chimpanzee).